The primary structure comprises 106 residues: Phosphoribosyl-ATP pyrophosphatase (106 aa).

Belongs to the PRA-PH family.

Its subcellular location is the cytoplasm. The enzyme catalyses 1-(5-phospho-beta-D-ribosyl)-ATP + H2O = 1-(5-phospho-beta-D-ribosyl)-5'-AMP + diphosphate + H(+). It functions in the pathway amino-acid biosynthesis; L-histidine biosynthesis; L-histidine from 5-phospho-alpha-D-ribose 1-diphosphate: step 2/9. This chain is Phosphoribosyl-ATP pyrophosphatase, found in Methylobacillus flagellatus (strain ATCC 51484 / DSM 6875 / VKM B-1610 / KT).